The following is a 289-amino-acid chain: ATP synthase subunit a (289 aa).

6 helical membrane-spanning segments follow: residues 43–63, 103–123, 160–180, 193–213, 232–252, and 259–279; these read AFHLDTLGWSVALGLIFLLIF, VIAPLALTIFVWVFLMNAVDL, FCVFALIIFYSIKVKGLGGFI, IFVQILLIPVNFLLEFVTLIA, VFILIAVMFGSGLLWLSGLGV, and AVFHILIITLQAFIFMMLTIV.

The protein belongs to the ATPase A chain family. As to quaternary structure, F-type ATPases have 2 components, CF(1) - the catalytic core - and CF(0) - the membrane proton channel. CF(1) has five subunits: alpha(3), beta(3), gamma(1), delta(1), epsilon(1). CF(0) has three main subunits: a(1), b(2) and c(9-12). The alpha and beta chains form an alternating ring which encloses part of the gamma chain. CF(1) is attached to CF(0) by a central stalk formed by the gamma and epsilon chains, while a peripheral stalk is formed by the delta and b chains.

The protein resides in the cell inner membrane. Key component of the proton channel; it plays a direct role in the translocation of protons across the membrane. In Pseudomonas putida (strain ATCC 700007 / DSM 6899 / JCM 31910 / BCRC 17059 / LMG 24140 / F1), this protein is ATP synthase subunit a.